We begin with the raw amino-acid sequence, 509 residues long: ATP synthase subunit alpha (509 aa).

An ATP-binding site is contributed by 169–176 (GDRQTGKT).

The protein belongs to the ATPase alpha/beta chains family. As to quaternary structure, F-type ATPases have 2 components, CF(1) - the catalytic core - and CF(0) - the membrane proton channel. CF(1) has five subunits: alpha(3), beta(3), gamma(1), delta(1), epsilon(1). CF(0) has three main subunits: a(1), b(2) and c(9-12). The alpha and beta chains form an alternating ring which encloses part of the gamma chain. CF(1) is attached to CF(0) by a central stalk formed by the gamma and epsilon chains, while a peripheral stalk is formed by the delta and b chains.

Its subcellular location is the cell inner membrane. It catalyses the reaction ATP + H2O + 4 H(+)(in) = ADP + phosphate + 5 H(+)(out). Produces ATP from ADP in the presence of a proton gradient across the membrane. The alpha chain is a regulatory subunit. This Novosphingobium aromaticivorans (strain ATCC 700278 / DSM 12444 / CCUG 56034 / CIP 105152 / NBRC 16084 / F199) protein is ATP synthase subunit alpha.